The primary structure comprises 405 residues: Argininosuccinate synthase (405 aa).

ATP-binding positions include 10–18 and A37; that span reads AYSGGLDTS. Positions 88 and 93 each coordinate L-citrulline. Residue G118 coordinates ATP. L-aspartate is bound by residues T120, N124, and D125. N124 lines the L-citrulline pocket. L-citrulline contacts are provided by R128, S179, S188, E264, and Y276.

It belongs to the argininosuccinate synthase family. Type 1 subfamily. In terms of assembly, homotetramer.

It localises to the cytoplasm. It catalyses the reaction L-citrulline + L-aspartate + ATP = 2-(N(omega)-L-arginino)succinate + AMP + diphosphate + H(+). Its pathway is amino-acid biosynthesis; L-arginine biosynthesis; L-arginine from L-ornithine and carbamoyl phosphate: step 2/3. This Pseudomonas entomophila (strain L48) protein is Argininosuccinate synthase.